The following is an 83-amino-acid chain: Small ribosomal subunit protein bS16 (83 aa).

Belongs to the bacterial ribosomal protein bS16 family.

This is Small ribosomal subunit protein bS16 from Pseudoalteromonas atlantica (strain T6c / ATCC BAA-1087).